The primary structure comprises 1030 residues: Eukaryotic translation initiation factor 3 subunit A (1030 aa).

Positions 94 to 126 form a coiled coil; that stretch reads FKEIITPIEQKVDELKEKIEKENQENPLVEQNE. Residues 308–483 form the PCI domain; sequence SQLYSSVLLV…GVIRFGHYDF (176 aa). Coiled-coil stretches lie at residues 527–620 and 720–772; these read INSL…KAKI and IQQE…RKNA. Composition is skewed to basic and acidic residues over residues 576–591, 743–771, 800–931, 939–985, and 1003–1019; these read RDQQ…REKE, EKAR…ERKN, RGGD…RRDG, GRRD…RRDG, and DSWR…KDAD. Disordered stretches follow at residues 576 to 603 and 737 to 1030; these read RDQQ…NQLD and RIAA…KKRY.

The protein belongs to the eIF-3 subunit A family. Component of the eukaryotic translation initiation factor 3 (eIF-3) complex.

The protein resides in the cytoplasm. RNA-binding component of the eukaryotic translation initiation factor 3 (eIF-3) complex, which is involved in protein synthesis of a specialized repertoire of mRNAs and, together with other initiation factors, stimulates binding of mRNA and methionyl-tRNAi to the 40S ribosome. The eIF-3 complex specifically targets and initiates translation of a subset of mRNAs involved in cell proliferation. The chain is Eukaryotic translation initiation factor 3 subunit A (eif3A) from Dictyostelium discoideum (Social amoeba).